Reading from the N-terminus, the 313-residue chain is Protein FixB (313 aa).

255–283 contributes to the FAD binding site; that stretch reads LYLAVGISGQIQHMVGANASQTIFAINKD.

The protein belongs to the ETF alpha-subunit/FixB family. Heterodimer of FixA and FixB.

It functions in the pathway amine and polyamine metabolism; carnitine metabolism. Required for anaerobic carnitine reduction. May bring reductant to CaiA. The chain is Protein FixB from Escherichia coli O81 (strain ED1a).